Reading from the N-terminus, the 355-residue chain is tRNA-specific 2-thiouridylase MnmA (355 aa).

ATP-binding positions include 7–14 (GLSGGVDS) and Leu33. Catalysis depends on Cys94, which acts as the Nucleophile. Cys94 and Cys193 are joined by a disulfide. Gly119 serves as a coordination point for ATP. The interval 143–145 (KDQ) is interaction with tRNA. Catalysis depends on Cys193, which acts as the Cysteine persulfide intermediate. An interaction with tRNA region spans residues 298 to 299 (RY).

It belongs to the MnmA/TRMU family.

It is found in the cytoplasm. The catalysed reaction is S-sulfanyl-L-cysteinyl-[protein] + uridine(34) in tRNA + AH2 + ATP = 2-thiouridine(34) in tRNA + L-cysteinyl-[protein] + A + AMP + diphosphate + H(+). In terms of biological role, catalyzes the 2-thiolation of uridine at the wobble position (U34) of tRNA, leading to the formation of s(2)U34. This chain is tRNA-specific 2-thiouridylase MnmA, found in Acaryochloris marina (strain MBIC 11017).